The sequence spans 342 residues: Dihydroorotate dehydrogenase (quinone) (342 aa).

FMN is bound by residues 65–69 and threonine 89; that span reads AGLDK. Substrate is bound at residue lysine 69. Substrate is bound at residue 114 to 118; it reads NRMGF. Positions 142 and 175 each coordinate FMN. Asparagine 175 is a substrate binding site. The active-site Nucleophile is the serine 178. Asparagine 180 is a substrate binding site. FMN contacts are provided by lysine 220 and threonine 248. A substrate-binding site is contributed by 249–250; sequence NT. Residues glycine 271, glycine 300, and 321 to 322 each bind FMN; that span reads YT.

This sequence belongs to the dihydroorotate dehydrogenase family. Type 2 subfamily. Monomer. FMN is required as a cofactor.

It is found in the cell membrane. It catalyses the reaction (S)-dihydroorotate + a quinone = orotate + a quinol. Its pathway is pyrimidine metabolism; UMP biosynthesis via de novo pathway; orotate from (S)-dihydroorotate (quinone route): step 1/1. Catalyzes the conversion of dihydroorotate to orotate with quinone as electron acceptor. This chain is Dihydroorotate dehydrogenase (quinone), found in Burkholderia pseudomallei (strain 668).